We begin with the raw amino-acid sequence, 121 residues long: Large ribosomal subunit protein uL24 (121 aa).

This sequence belongs to the universal ribosomal protein uL24 family. As to quaternary structure, part of the 50S ribosomal subunit.

Functionally, one of two assembly initiator proteins, it binds directly to the 5'-end of the 23S rRNA, where it nucleates assembly of the 50S subunit. Its function is as follows. Located at the polypeptide exit tunnel on the outside of the subunit. This chain is Large ribosomal subunit protein uL24, found in Methanocorpusculum labreanum (strain ATCC 43576 / DSM 4855 / Z).